Consider the following 629-residue polypeptide: Replication protein A 70 kDa DNA-binding subunit D (629 aa).

Residues Leu-112–Ser-135 form a disordered region. Residues Lys-115–His-131 show a composition bias toward basic and acidic residues. The segment at residues Trp-194 to Glu-280 is a DNA-binding region (OB). Residues Cys-492–Cys-512 form a C4-type zinc finger.

The protein belongs to the replication factor A protein 1 family. In terms of assembly, heterotrimer of RPA1, RPA2 and RPA3 (canonical replication protein A complex).

It is found in the nucleus. Its function is as follows. Component of the replication protein A complex (RPA) required for DNA recombination, repair and replication. The activity of RPA is mediated by single-stranded DNA binding and protein interactions. Probably involved in repair of double-strand DNA breaks (DSBs) induced by genotoxic stresses. The sequence is that of Replication protein A 70 kDa DNA-binding subunit D (RPA1D) from Arabidopsis thaliana (Mouse-ear cress).